A 514-amino-acid polypeptide reads, in one-letter code: MTRRALISVSDKTGIEAFARALVERGWELLSTGGTLAALRAAGIPATAVSDVTGFPEILDGRVKTLHPAIHGGILARREEGHLAQLAEHGLDLIDLVCVNLYPFRETVARGATFEEAIENIDIGGPAMIRAAAKNHAGVLVLVDPADYGLAFQDEVSQTDRRRLAAKAFRHTSDYDAAISTYLAGADEAGETLPEHLTLDLSRIAAVRYGENPHQPGAIYRLGTERGPVLDARLLSGKPMSFNNYADADAAWALAQELAAQEDQPPGTRAVCVAVKHANPCGVAVADSVQAAWEQARDADTLSVFGGVVAVSRPVDLAAAQSMRGTFLEVLIAPDVTPEAVAWFAAKKPDLRVLVADTAAHPGTLDVRPLAGGFAVQRRDTRPWDDLCPEVVTVRPPTEQEWGDLRFAWAVVKHARSNAVVLAKNGVTVGLGAGAVSRIWAAERAVQNAGERARGAVLASEAFFPFDDVVRLAAEAGVTAVLQPGGAKRDPEVIAAANELGLSMVFTGSRHFRH.

An MGS-like domain is found at methionine 1–valine 143.

It belongs to the PurH family.

The enzyme catalyses (6R)-10-formyltetrahydrofolate + 5-amino-1-(5-phospho-beta-D-ribosyl)imidazole-4-carboxamide = 5-formamido-1-(5-phospho-D-ribosyl)imidazole-4-carboxamide + (6S)-5,6,7,8-tetrahydrofolate. The catalysed reaction is IMP + H2O = 5-formamido-1-(5-phospho-D-ribosyl)imidazole-4-carboxamide. It participates in purine metabolism; IMP biosynthesis via de novo pathway; 5-formamido-1-(5-phospho-D-ribosyl)imidazole-4-carboxamide from 5-amino-1-(5-phospho-D-ribosyl)imidazole-4-carboxamide (10-formyl THF route): step 1/1. It functions in the pathway purine metabolism; IMP biosynthesis via de novo pathway; IMP from 5-formamido-1-(5-phospho-D-ribosyl)imidazole-4-carboxamide: step 1/1. The polypeptide is Bifunctional purine biosynthesis protein PurH (Deinococcus geothermalis (strain DSM 11300 / CIP 105573 / AG-3a)).